We begin with the raw amino-acid sequence, 160 residues long: MATAYQNLSEYDFNSVPDASEMNIGIVVAEWNKNITEKLLEGACNTLEKHGVKPENIVVKRVPGSFELTFGAKRLAETKELDAVIVLGCVVRGDTPHFDYVCSGVTQGITELNLMYDIPFIFGLLTTDTMQQSEDRAGGRYGNKGDEAAVTAIKMVNFSA.

5-amino-6-(D-ribitylamino)uracil contacts are provided by residues Trp-31, 65-67 (SFE), and 89-91 (CVV). (2S)-2-hydroxy-3-oxobutyl phosphate is bound at residue 94 to 95 (DT). His-97 serves as the catalytic Proton donor. Phe-122 lines the 5-amino-6-(D-ribitylamino)uracil pocket. Arg-136 contributes to the (2S)-2-hydroxy-3-oxobutyl phosphate binding site.

Belongs to the DMRL synthase family.

The catalysed reaction is (2S)-2-hydroxy-3-oxobutyl phosphate + 5-amino-6-(D-ribitylamino)uracil = 6,7-dimethyl-8-(1-D-ribityl)lumazine + phosphate + 2 H2O + H(+). Its pathway is cofactor biosynthesis; riboflavin biosynthesis; riboflavin from 2-hydroxy-3-oxobutyl phosphate and 5-amino-6-(D-ribitylamino)uracil: step 1/2. Catalyzes the formation of 6,7-dimethyl-8-ribityllumazine by condensation of 5-amino-6-(D-ribitylamino)uracil with 3,4-dihydroxy-2-butanone 4-phosphate. This is the penultimate step in the biosynthesis of riboflavin. The polypeptide is 6,7-dimethyl-8-ribityllumazine synthase (Parabacteroides distasonis (strain ATCC 8503 / DSM 20701 / CIP 104284 / JCM 5825 / NCTC 11152)).